We begin with the raw amino-acid sequence, 258 residues long: Isoprenyl transferase (258 aa).

Aspartate 38 is an active-site residue. Aspartate 38 serves as a coordination point for Mg(2+). Substrate is bound by residues 39–42 (GNGR), tryptophan 43, arginine 51, histidine 55, and 83–85 (STE). Asparagine 86 (proton acceptor) is an active-site residue. Substrate-binding positions include tryptophan 87, arginine 89, arginine 206, and 212-214 (RIS). A Mg(2+)-binding site is contributed by glutamate 225.

It belongs to the UPP synthase family. Homodimer. It depends on Mg(2+) as a cofactor.

Catalyzes the condensation of isopentenyl diphosphate (IPP) with allylic pyrophosphates generating different type of terpenoids. This chain is Isoprenyl transferase, found in Bacillus cereus (strain ATCC 14579 / DSM 31 / CCUG 7414 / JCM 2152 / NBRC 15305 / NCIMB 9373 / NCTC 2599 / NRRL B-3711).